The following is a 158-amino-acid chain: PTS system fructose-specific EIIB component (158 aa).

The PTS EIIB type-2 domain occupies 1-98 (MKLVAVTSCP…AEAVVQKAVE (98 aa)). Catalysis depends on C9, which acts as the Phosphocysteine intermediate. Phosphocysteine; by EIIA is present on C9. The segment at 104–147 (KTGSVTFGSGDDGEDADVGADDSSDDADAAESDEPVRRGGDPEK) is disordered. Over residues 114–136 (DDGEDADVGADDSSDDADAAESD) the composition is skewed to acidic residues. A compositionally biased stretch (basic and acidic residues) spans 137-147 (EPVRRGGDPEK).

It localises to the cytoplasm. The catalysed reaction is D-fructose(out) + N(pros)-phospho-L-histidyl-[protein] = D-fructose 1-phosphate(in) + L-histidyl-[protein]. Functionally, the phosphoenolpyruvate-dependent sugar phosphotransferase system (sugar PTS), a major carbohydrate active transport system, catalyzes the phosphorylation of incoming sugar substrates concomitantly with their translocation across the cell membrane. The enzyme II PtfABC PTS system is involved in fructose transport. The chain is PTS system fructose-specific EIIB component from Haloferax volcanii (strain ATCC 29605 / DSM 3757 / JCM 8879 / NBRC 14742 / NCIMB 2012 / VKM B-1768 / DS2) (Halobacterium volcanii).